Consider the following 510-residue polypeptide: 2,3-bisphosphoglycerate-independent phosphoglycerate mutase (510 aa).

Residues aspartate 12 and serine 62 each coordinate Mn(2+). Serine 62 functions as the Phosphoserine intermediate in the catalytic mechanism. Substrate contacts are provided by residues histidine 123, 153 to 154 (RD), arginine 185, arginine 191, 260 to 263 (RPDR), and lysine 333. Mn(2+)-binding residues include aspartate 400, histidine 404, aspartate 441, histidine 442, and histidine 460.

This sequence belongs to the BPG-independent phosphoglycerate mutase family. As to quaternary structure, monomer. Mn(2+) serves as cofactor.

It carries out the reaction (2R)-2-phosphoglycerate = (2R)-3-phosphoglycerate. The protein operates within carbohydrate degradation; glycolysis; pyruvate from D-glyceraldehyde 3-phosphate: step 3/5. Its function is as follows. Catalyzes the interconversion of 2-phosphoglycerate and 3-phosphoglycerate. The protein is 2,3-bisphosphoglycerate-independent phosphoglycerate mutase of Clostridium acetobutylicum (strain ATCC 824 / DSM 792 / JCM 1419 / IAM 19013 / LMG 5710 / NBRC 13948 / NRRL B-527 / VKM B-1787 / 2291 / W).